The primary structure comprises 256 residues: Probable aquaporin TIP-type alpha (256 aa).

Over 1 to 24 (MATRRYSFGRTDEATHPDSMRASL) the chain is Cytoplasmic. Ser7 is modified (phosphoserine; by CPK). A helical membrane pass occupies residues 25–44 (AEFASTFIFVFAGEGSGLAL). The Vacuolar portion of the chain corresponds to 45-57 (VKIYQDSAFSAGE). The helical transmembrane segment at 58-77 (LLALALAHAFALFAAVSASM) threads the bilayer. The Cytoplasmic portion of the chain corresponds to 78–102 (HVSGGHVNPAVSFGALIGGRISVIR). Residues 85 to 87 (NPA) carry the NPA 1 motif. A helical membrane pass occupies residues 103–121 (AVYYWIAQLLGSIVAALVL). Residues 122–143 (RLVTNNMRPSGFHVSPGVGVGH) lie on the Vacuolar side of the membrane. Residues 144-164 (MFILEVVMTFGLMYTVYGTAI) traverse the membrane as a helical segment. Residues 165–169 (DPKRG) are Cytoplasmic-facing. The chain crosses the membrane as a helical span at residues 170-189 (AVSYIAPLAIGLIVGANILV). Over 190–216 (GGPFDGACMNPALAFGPSLVGWQWHQH) the chain is Vacuolar. The NPA 2 motif lies at 199 to 201 (NPA). Residues 217-239 (WIFWVGPLLGAALAALVYEYAVI) form a helical membrane-spanning segment. The Cytoplasmic segment spans residues 240–256 (PIEPPPHHHQPLATEDY).

The protein belongs to the MIP/aquaporin (TC 1.A.8) family. TIP (TC 1.A.8.10) subfamily. In terms of processing, phosphorylated by a tonoplast-bound calcium-dependent protein kinase. Found in all seed tissues that are alive at seed maturity, but not in tissues that lose viability during seed maturation.

The protein localises to the vacuole membrane. Channel protein in tonoplast. These proteins may allow the diffusion of amino acids and/or peptides from the vacuolar compartment to the cytoplasm. This is Probable aquaporin TIP-type alpha from Phaseolus vulgaris (Kidney bean).